Here is a 579-residue protein sequence, read N- to C-terminus: YTH domain-containing family protein 2 (579 aa).

A disordered region spans residues 1 to 45 (MSASSLLEQRPKGQGNKVQNGSVHQKDGLNDDDFEPYLSPQARPN). Residue Ser-2 is modified to N-acetylserine. Ser-2, Ser-4, Ser-5, Ser-22, Ser-39, and Ser-196 each carry phosphoserine. Positions 2–384 (SASSLLEQRP…QAGSGSTPSE (383 aa)) are localization to mRNA processing bodies (P-bodies). The disordered stretch occupies residues 247–387 (AKQQPKLKTK…SGSTPSEPHP (141 aa)). A compositionally biased stretch (polar residues) spans 291–316 (ALVQNIGQPTQGSPQHVGQQANNSPP). The span at 337 to 349 (AQLSVQQQAAQPT) shows a compositional bias: low complexity. Ser-359 carries the post-translational modification Phosphoserine. The segment covering 359–371 (SGFGHNGVDGNGV) has biased composition (gly residues). Polar residues predominate over residues 372–383 (GQSQAGSGSTPS). An interaction with m6A-containing mRNAs region spans residues 385–579 (PHPVLEKLRS…VKKERQGRGK (195 aa)). Ser-394 bears the Phosphoserine mark. In terms of domain architecture, YTH spans 410–544 (GRVFIIKSYS…EKAKQVLKII (135 aa)). RNA is bound by residues 416 to 418 (KSY), Asp-422, 432 to 433 (WC), Asn-462, Trp-486, and Trp-491.

It belongs to the YTHDF family. YTHDF2 subfamily. Interacts with CNOT1; interaction is direct and promotes recruitment of the CCR4-NOT complex. Interacts with YTHDF3. Interacts with RIDA/HRSP12; interaction leads to recruitment of the ribonuclease P/MRP complex. In terms of processing, ubiquitinated by the SCF(SKP2) complex, leading to its degradation.

It localises to the cytoplasm. It is found in the cytosol. The protein resides in the P-body. Its subcellular location is the stress granule. The protein localises to the nucleus. Its function is as follows. Specifically recognizes and binds N6-methyladenosine (m6A)-containing RNAs, and regulates their stability. M6A is a modification present at internal sites of mRNAs and some non-coding RNAs and plays a role in mRNA stability and processing. Acts as a regulator of mRNA stability by promoting degradation of m6A-containing mRNAs via interaction with the CCR4-NOT and ribonuclease P/MRP complexes, depending on the context. The YTHDF paralogs (YTHDF1, YTHDF2 and YTHDF3) share m6A-containing mRNAs targets and act redundantly to mediate mRNA degradation and cellular differentiation. M6A-containing mRNAs containing a binding site for RIDA/HRSP12 (5'-GGUUC-3') are preferentially degraded by endoribonucleolytic cleavage: cooperative binding of RIDA/HRSP12 and YTHDF2 to transcripts leads to recruitment of the ribonuclease P/MRP complex. Other m6A-containing mRNAs undergo deadenylation via direct interaction between YTHDF2 and CNOT1, leading to recruitment of the CCR4-NOT and subsequent deadenylation of m6A-containing mRNAs. Required maternally to regulate oocyte maturation: probably acts by binding to m6A-containing mRNAs, thereby regulating maternal transcript dosage during oocyte maturation, which is essential for the competence of oocytes to sustain early zygotic development. Also required during spermatogenesis: regulates spermagonial adhesion by promoting degradation of m6A-containing transcripts coding for matrix metallopeptidases. Also involved in hematopoietic stem cells specification by binding to m6A-containing mRNAs, leading to promote their degradation. Also acts as a regulator of neural development by promoting m6A-dependent degradation of neural development-related mRNA targets. Inhibits neural specification of induced pluripotent stem cells by binding to methylated neural-specific mRNAs and promoting their degradation, thereby restraining neural differentiation. Regulates circadian regulation of hepatic lipid metabolism: acts by promoting m6A-dependent degradation of PPARA transcripts. Regulates the innate immune response to infection by inhibiting the type I interferon response: acts by binding to m6A-containing IFNB transcripts and promoting their degradation. May also act as a promoter of cap-independent mRNA translation following heat shock stress: upon stress, relocalizes to the nucleus and specifically binds mRNAs with some m6A methylation mark at their 5'-UTR, protecting demethylation of mRNAs by FTO, thereby promoting cap-independent mRNA translation. Regulates mitotic entry by promoting the phase-specific m6A-dependent degradation of WEE1 transcripts. Promotes formation of phase-separated membraneless compartments, such as P-bodies or stress granules, by undergoing liquid-liquid phase separation upon binding to mRNAs containing multiple m6A-modified residues: polymethylated mRNAs act as a multivalent scaffold for the binding of YTHDF proteins, juxtaposing their disordered regions and thereby leading to phase separation. The resulting mRNA-YTHDF complexes then partition into different endogenous phase-separated membraneless compartments, such as P-bodies, stress granules or neuronal RNA granules. May also recognize and bind RNAs modified by C5-methylcytosine (m5C) and act as a regulator of rRNA processing. The polypeptide is YTH domain-containing family protein 2 (Macaca fascicularis (Crab-eating macaque)).